The sequence spans 538 residues: CTP synthase (538 aa).

The tract at residues 1 to 266 (MKTKFIFVTG…DDQVVDKLNI (266 aa)) is amidoligase domain. Ser-14 lines the CTP pocket. Ser-14 is a UTP binding site. ATP contacts are provided by residues 15–20 (SIGKGL) and Asp-72. Asp-72 and Glu-140 together coordinate Mg(2+). CTP contacts are provided by residues 147 to 149 (DIE), 187 to 192 (KTKPTQ), and Lys-223. Residues 187–192 (KTKPTQ) and Lys-223 contribute to the UTP site. Positions 292-534 (HIAIVGKYVN…IAAALEHRGK (243 aa)) constitute a Glutamine amidotransferase type-1 domain. Gly-354 is a binding site for L-glutamine. The active-site Nucleophile; for glutamine hydrolysis is Cys-381. L-glutamine contacts are provided by residues 382–385 (LGMQ), Glu-405, and Arg-462. Residues His-507 and Glu-509 contribute to the active site.

This sequence belongs to the CTP synthase family. As to quaternary structure, homotetramer.

It carries out the reaction UTP + L-glutamine + ATP + H2O = CTP + L-glutamate + ADP + phosphate + 2 H(+). The enzyme catalyses L-glutamine + H2O = L-glutamate + NH4(+). The catalysed reaction is UTP + NH4(+) + ATP = CTP + ADP + phosphate + 2 H(+). It participates in pyrimidine metabolism; CTP biosynthesis via de novo pathway; CTP from UDP: step 2/2. Its activity is regulated as follows. Allosterically activated by GTP, when glutamine is the substrate; GTP has no effect on the reaction when ammonia is the substrate. The allosteric effector GTP functions by stabilizing the protein conformation that binds the tetrahedral intermediate(s) formed during glutamine hydrolysis. Inhibited by the product CTP, via allosteric rather than competitive inhibition. Its function is as follows. Catalyzes the ATP-dependent amination of UTP to CTP with either L-glutamine or ammonia as the source of nitrogen. Regulates intracellular CTP levels through interactions with the four ribonucleotide triphosphates. This is CTP synthase from Geobacter metallireducens (strain ATCC 53774 / DSM 7210 / GS-15).